We begin with the raw amino-acid sequence, 689 residues long: Ataxin-1-like (689 aa).

A compositionally biased stretch (basic and acidic residues) spans 1–19; the sequence is MKPVHERSQECLPPKKRDL. 3 disordered regions span residues 1–46, 185–223, and 242–297; these read MKPV…SEWS, ATPPPQAPSPAHSFNKAPSATSPSGQLPHHSSTQPLDLA, and LHET…GEGQ. The segment at 20 to 197 is interaction with NCOR2 and ATXN1; sequence PVTSEDMGRT…PPQAPSPAHS (178 aa). Positions 20 to 197 are self-association; it reads PVTSEDMGRT…PPQAPSPAHS (178 aa). Composition is skewed to polar residues over residues 28–43 and 200–219; these read RTTSCSTNHTPSSDAS and KAPSATSPSGQLPHHSSTQP. Over residues 257–268 the composition is skewed to low complexity; that stretch reads QESQSALEAAAA. A compositionally biased stretch (basic and acidic residues) spans 273-285; the sequence is RPRERNLVRRESE. The residue at position 284 (serine 284) is a Phosphoserine. A Phosphothreonine modification is found at threonine 330. Residues 357–405 form a disordered region; the sequence is KEEPSPLNLSHHTPDHQGEGRGSARNPAELAEKSQARGFYPQSHQEPVK. Serine 361 carries the post-translational modification Phosphoserine. The region spanning 457–588 is the AXH domain; sequence PPPITSSHLP…SISLQSLNSN (132 aa). Serine 615 is subject to Phosphoserine. The segment at 617 to 647 is disordered; sequence ELCDSEGKSQPAGEGSRVVEPSQPESGAQAC.

Belongs to the ATXN1 family. In terms of assembly, homodimer. Interacts with CIC. Interacts (via AXH domain) with NCOR2. Interacts with ATXN1. Directly interacts with RBPJ; this interaction is disrupted in the presence of Notch intracellular domain. Competes with ATXN1 for RBPJ-binding. Found in a complex with CIC and ATXN1. As to expression, expressed in cerebellum and cerebral cortex.

Its subcellular location is the nucleus. The protein localises to the cell projection. The protein resides in the dendrite. Functionally, chromatin-binding factor that repress Notch signaling in the absence of Notch intracellular domain by acting as a CBF1 corepressor. Binds to the HEY promoter and might assist, along with NCOR2, RBPJ-mediated repression. Can suppress ATXN1 cytotoxicity in spinocerebellar ataxia type 1 (SCA1). In concert with CIC and ATXN1, involved in brain development. This is Ataxin-1-like (ATXN1L) from Homo sapiens (Human).